The primary structure comprises 419 residues: L-rhamnose isomerase (419 aa).

Residues His262, Asp294, and Asp296 each coordinate Mn(2+).

Belongs to the rhamnose isomerase family. As to quaternary structure, homotetramer. It depends on Mn(2+) as a cofactor.

The protein resides in the cytoplasm. It carries out the reaction L-rhamnopyranose = L-rhamnulose. The protein operates within carbohydrate degradation; L-rhamnose degradation; glycerone phosphate from L-rhamnose: step 1/3. Its function is as follows. Catalyzes the interconversion of L-rhamnose and L-rhamnulose. In Salmonella newport (strain SL254), this protein is L-rhamnose isomerase.